Consider the following 761-residue polypeptide: Copper-exporting P-type ATPase (761 aa).

At threonine 2 the chain carries N-acetylthreonine. Positions 14 to 78 (QRIQLRISGM…AVRRAGYQAD (65 aa)) constitute an HMA domain. Residues cysteine 25 and cysteine 28 each contribute to the Cu(+) site. Helical transmembrane passes span 102-122 (LAIA…FGVV), 129-149 (GWQW…AWPF), 164-184 (METL…YTVF), 199-219 (LLGS…FVLV), 361-381 (VFVP…LIAG), and 387-407 (AVSA…GLAT). The 4-aspartylphosphate intermediate role is filled by aspartate 443. The next 2 helical transmembrane spans lie at 695 to 714 (MVWA…AGLL) and 718 to 735 (VAGA…SNSL).

It belongs to the cation transport ATPase (P-type) (TC 3.A.3) family. Type IB subfamily.

It localises to the cell membrane. It catalyses the reaction Cu(+)(in) + ATP + H2O = Cu(+)(out) + ADP + phosphate + H(+). Its activity is regulated as follows. ATPase activity is stimulated by Cu(+) ions. In terms of biological role, involved in copper export. Could be involved in the copper detoxification of mycobacterial cells. The sequence is that of Copper-exporting P-type ATPase (ctpA) from Mycobacterium tuberculosis (strain ATCC 25618 / H37Rv).